A 396-amino-acid polypeptide reads, in one-letter code: Elongation factor Tu (396 aa).

Residues 11-205 (KPHVNIGTIG…TVDEYVPTPE (195 aa)) form the tr-type G domain. Residues 20 to 27 (GHVDHGKT) are G1. A GTP-binding site is contributed by 20 to 27 (GHVDHGKT). T27 provides a ligand contact to Mg(2+). A G2 region spans residues 61 to 65 (GITIN). The G3 stretch occupies residues 82–85 (DAPG). GTP is bound by residues 82 to 86 (DAPGH) and 137 to 140 (NKTD). The interval 137–140 (NKTD) is G4. Positions 175 to 177 (SAL) are G5.

The protein belongs to the TRAFAC class translation factor GTPase superfamily. Classic translation factor GTPase family. EF-Tu/EF-1A subfamily. As to quaternary structure, monomer.

Its subcellular location is the cytoplasm. It carries out the reaction GTP + H2O = GDP + phosphate + H(+). Functionally, GTP hydrolase that promotes the GTP-dependent binding of aminoacyl-tRNA to the A-site of ribosomes during protein biosynthesis. The protein is Elongation factor Tu of Latilactobacillus sakei subsp. sakei (strain 23K) (Lactobacillus sakei subsp. sakei).